A 190-amino-acid chain; its full sequence is Elongation factor P (190 aa).

K34 is modified (N6-(3,6-diaminohexanoyl)-5-hydroxylysine).

This sequence belongs to the elongation factor P family. May be beta-lysylated on the epsilon-amino group of Lys-34 by the combined action of EpmA and EpmB, and then hydroxylated on the C5 position of the same residue by EpmC (if this protein is present). Lysylation is critical for the stimulatory effect of EF-P on peptide-bond formation. The lysylation moiety may extend toward the peptidyltransferase center and stabilize the terminal 3-CCA end of the tRNA. Hydroxylation of the C5 position on Lys-34 may allow additional potential stabilizing hydrogen-bond interactions with the P-tRNA.

It localises to the cytoplasm. Its pathway is protein biosynthesis; polypeptide chain elongation. Its function is as follows. Involved in peptide bond synthesis. Alleviates ribosome stalling that occurs when 3 or more consecutive Pro residues or the sequence PPG is present in a protein, possibly by augmenting the peptidyl transferase activity of the ribosome. Modification of Lys-34 is required for alleviation. This Psychrobacter cryohalolentis (strain ATCC BAA-1226 / DSM 17306 / VKM B-2378 / K5) protein is Elongation factor P.